The chain runs to 98 residues: NADH-ubiquinone oxidoreductase chain 4L (98 aa).

3 consecutive transmembrane segments (helical) span residues 1–21 (MTMV…GLLM), 29–49 (SLLC…VTIL), and 61–81 (IVLL…LVMV).

It belongs to the complex I subunit 4L family. Core subunit of respiratory chain NADH dehydrogenase (Complex I) which is composed of 45 different subunits.

Its subcellular location is the mitochondrion inner membrane. The catalysed reaction is a ubiquinone + NADH + 5 H(+)(in) = a ubiquinol + NAD(+) + 4 H(+)(out). In terms of biological role, core subunit of the mitochondrial membrane respiratory chain NADH dehydrogenase (Complex I) which catalyzes electron transfer from NADH through the respiratory chain, using ubiquinone as an electron acceptor. Part of the enzyme membrane arm which is embedded in the lipid bilayer and involved in proton translocation. The protein is NADH-ubiquinone oxidoreductase chain 4L (MT-ND4L) of Monachus monachus (Mediterranean monk seal).